The sequence spans 286 residues: MDQTIDWWPSPAKLNLFLHINGRYPNGYHQLQSLFQLLDKGDELAFTVTPHAEITLLTPIDGVANEDNLIVKAARLLQTHTGCSEGCDIQLRKVLPMGGGIGGGSSNAATTLIALNYLWKCNLSLTELAELGLALGADVPVFVMGNTAFAQGVGEQLTPVNIAQKHYLVVFPECHVSTAEVFNAPDLPRNTPLISWQEYDFDQTHNDCQQLVCNRFENVANTLRWLLEYAPSRMTGTGACLFAVFTSNQEAENVLANLPSGCSGFVSKGVDVSPVHDKLAHLGSIS.

Lysine 13 is an active-site residue. Position 96-106 (96-106 (PMGGGIGGGSS)) interacts with ATP. The active site involves aspartate 138.

It belongs to the GHMP kinase family. IspE subfamily.

The enzyme catalyses 4-CDP-2-C-methyl-D-erythritol + ATP = 4-CDP-2-C-methyl-D-erythritol 2-phosphate + ADP + H(+). It functions in the pathway isoprenoid biosynthesis; isopentenyl diphosphate biosynthesis via DXP pathway; isopentenyl diphosphate from 1-deoxy-D-xylulose 5-phosphate: step 3/6. Functionally, catalyzes the phosphorylation of the position 2 hydroxy group of 4-diphosphocytidyl-2C-methyl-D-erythritol. This Pseudoalteromonas atlantica (strain T6c / ATCC BAA-1087) protein is 4-diphosphocytidyl-2-C-methyl-D-erythritol kinase.